Consider the following 369-residue polypeptide: Immunoglobulin superfamily member 5 (369 aa).

The signal sequence occupies residues methionine 1 to serine 24. Ig-like V-type domains lie at tyrosine 25–glutamine 125 and glycine 128–asparagine 217. At tyrosine 25–alanine 239 the chain is on the extracellular side. N-linked (GlcNAc...) asparagine glycosylation is found at asparagine 33 and asparagine 45. A disulfide bridge connects residues cysteine 46 and cysteine 109. Residues asparagine 146, asparagine 196, and asparagine 217 are each glycosylated (N-linked (GlcNAc...) asparagine). The cysteines at positions 149 and 201 are disulfide-linked. A helical membrane pass occupies residues isoleucine 240–isoleucine 260. Topologically, residues phenylalanine 261 to valine 369 are cytoplasmic. A disordered region spans residues proline 321–serine 354.

This sequence belongs to the immunoglobulin superfamily. As to quaternary structure, interacts with MAGI1 at tight junctions, forms a tripartite complex with NPHS1. Interacts with LNX1 isoform 2 via its PDZ 2 domain, it may also interact with other isoforms containing this domain. As to expression, in kidney, it is found in glomeruli and in the proximal tubules (at protein level).

The protein resides in the apical cell membrane. It is found in the cell junction. The protein localises to the tight junction. Provides, together with MAGI1, an adhesion machinery at tight junctions, which may regulate the permeability of kidney glomerulus and small intestinal epithelial cells. Mediates calcium-independent homophilic cell adhesion. In testis, it may function as a cell adhesion molecule rather than a tight-junction protein. It may participate in the adhesion between spermatogonia-spermatogonia, spermatogonia-Sertoli cells, and Sertoli cells-Sertoli cells. The protein is Immunoglobulin superfamily member 5 (Igsf5) of Rattus norvegicus (Rat).